Here is a 395-residue protein sequence, read N- to C-terminus: Chorismate synthase (395 aa).

Residues R40 and R46 each coordinate NADP(+). Residues 135 to 137 (RAS) and 256 to 257 (QA) each bind FMN. A compositionally biased stretch (basic and acidic residues) spans 272 to 283 (RRGSQAHDEMRP). Positions 272–296 (RRGSQAHDEMRPGPDGILRSTNRAG) are disordered. FMN contacts are provided by residues G300, 315–319 (KPIST), and R341.

It belongs to the chorismate synthase family. In terms of assembly, homotetramer. It depends on FMNH2 as a cofactor.

It catalyses the reaction 5-O-(1-carboxyvinyl)-3-phosphoshikimate = chorismate + phosphate. It functions in the pathway metabolic intermediate biosynthesis; chorismate biosynthesis; chorismate from D-erythrose 4-phosphate and phosphoenolpyruvate: step 7/7. Functionally, catalyzes the anti-1,4-elimination of the C-3 phosphate and the C-6 proR hydrogen from 5-enolpyruvylshikimate-3-phosphate (EPSP) to yield chorismate, which is the branch point compound that serves as the starting substrate for the three terminal pathways of aromatic amino acid biosynthesis. This reaction introduces a second double bond into the aromatic ring system. This is Chorismate synthase from Rhodococcus jostii (strain RHA1).